An 87-amino-acid chain; its full sequence is U15-lycotoxin-Ls1f (87 aa).

The N-terminal stretch at 1–20 (MNSKIFAVLLLLAFLSCVLS) is a signal peptide. Residues 21-66 (DQYCPKSSITACKKMNIRNDCCKDDDCTGGSWCCATPCGNFCKYPT) form the WAP domain. Cystine bridges form between C24-C54, C32-C58, C41-C53, C42-C80, and C47-C62.

This sequence belongs to the venom protein 11 family. 01 (wap-1) subfamily. Contains 5 disulfide bonds. In terms of tissue distribution, expressed by the venom gland.

The protein resides in the secreted. In terms of biological role, has antibacterial activity. This chain is U15-lycotoxin-Ls1f, found in Lycosa singoriensis (Wolf spider).